Here is a 344-residue protein sequence, read N- to C-terminus: Anthranilate phosphoribosyltransferase (344 aa).

5-phospho-alpha-D-ribose 1-diphosphate-binding positions include Gly79, 82-83 (GD), Thr87, 89-92 (NIST), 107-115 (KHGNRSVSS), and Ser119. Residue Gly79 coordinates anthranilate. Residue Ser91 coordinates Mg(2+). Asn110 serves as a coordination point for anthranilate. Arg165 lines the anthranilate pocket. The Mg(2+) site is built by Asp224 and Glu225.

This sequence belongs to the anthranilate phosphoribosyltransferase family. Homodimer. Mg(2+) serves as cofactor.

It catalyses the reaction N-(5-phospho-beta-D-ribosyl)anthranilate + diphosphate = 5-phospho-alpha-D-ribose 1-diphosphate + anthranilate. Its pathway is amino-acid biosynthesis; L-tryptophan biosynthesis; L-tryptophan from chorismate: step 2/5. In terms of biological role, catalyzes the transfer of the phosphoribosyl group of 5-phosphorylribose-1-pyrophosphate (PRPP) to anthranilate to yield N-(5'-phosphoribosyl)-anthranilate (PRA). The polypeptide is Anthranilate phosphoribosyltransferase (Salinibacter ruber (strain DSM 13855 / M31)).